The following is a 282-amino-acid chain: MQIVNISAYKFVSLDDIETLRPAMRERCEAAGLKGTILLAPEGINLFLAGPREAIDGFMAWLHADARFADIAPKESLSENQPFKRMLVRAKKEIITMKMPLIRPEAGRAPSVRPADLKRWLDQGHDDEGRPVVMLDTRNDFEVAVGTFENAVEYDIAKFSEFPDAVAAHKAELDGKTVVSFCTGGIRCEKAAIHMQEVGIERVYQLEGGILKYFEEVGGSHYRGDCFVFDYRTALNPSLEPAGPKQCFACRAVVTPEQQQSPHYVVGKSCPHCIGGKDRAAA.

Residues 128–222 (EGRPVVMLDT…YFEEVGGSHY (95 aa)) form the Rhodanese domain. C182 serves as the catalytic Cysteine persulfide intermediate.

The protein belongs to the TrhO family.

It carries out the reaction uridine(34) in tRNA + AH2 + O2 = 5-hydroxyuridine(34) in tRNA + A + H2O. Catalyzes oxygen-dependent 5-hydroxyuridine (ho5U) modification at position 34 in tRNAs. The sequence is that of tRNA uridine(34) hydroxylase from Cupriavidus taiwanensis (strain DSM 17343 / BCRC 17206 / CCUG 44338 / CIP 107171 / LMG 19424 / R1) (Ralstonia taiwanensis (strain LMG 19424)).